A 366-amino-acid polypeptide reads, in one-letter code: tRNA/tmRNA (uracil-C(5))-methyltransferase (366 aa).

The S-adenosyl-L-methionine site is built by glutamine 190, tyrosine 218, asparagine 223, glutamate 239, and aspartate 299. The active-site Nucleophile is cysteine 324. Catalysis depends on glutamate 358, which acts as the Proton acceptor.

It belongs to the class I-like SAM-binding methyltransferase superfamily. RNA M5U methyltransferase family. TrmA subfamily.

It carries out the reaction uridine(54) in tRNA + S-adenosyl-L-methionine = 5-methyluridine(54) in tRNA + S-adenosyl-L-homocysteine + H(+). The enzyme catalyses uridine(341) in tmRNA + S-adenosyl-L-methionine = 5-methyluridine(341) in tmRNA + S-adenosyl-L-homocysteine + H(+). Functionally, dual-specificity methyltransferase that catalyzes the formation of 5-methyluridine at position 54 (m5U54) in all tRNAs, and that of position 341 (m5U341) in tmRNA (transfer-mRNA). The polypeptide is tRNA/tmRNA (uracil-C(5))-methyltransferase (Salmonella arizonae (strain ATCC BAA-731 / CDC346-86 / RSK2980)).